The primary structure comprises 348 residues: tRNA N6-adenosine threonylcarbamoyltransferase (348 aa).

Residues His-116 and His-120 each contribute to the Fe cation site. Substrate contacts are provided by residues 138–142 (IISGG), Asp-171, Gly-184, and Asn-282. Asp-310 lines the Fe cation pocket.

It belongs to the KAE1 / TsaD family. It depends on Fe(2+) as a cofactor.

It localises to the cytoplasm. It carries out the reaction L-threonylcarbamoyladenylate + adenosine(37) in tRNA = N(6)-L-threonylcarbamoyladenosine(37) in tRNA + AMP + H(+). Its function is as follows. Required for the formation of a threonylcarbamoyl group on adenosine at position 37 (t(6)A37) in tRNAs that read codons beginning with adenine. Is involved in the transfer of the threonylcarbamoyl moiety of threonylcarbamoyl-AMP (TC-AMP) to the N6 group of A37, together with TsaE and TsaB. TsaD likely plays a direct catalytic role in this reaction. In Ehrlichia ruminantium (strain Gardel), this protein is tRNA N6-adenosine threonylcarbamoyltransferase.